Reading from the N-terminus, the 122-residue chain is Large ribosomal subunit protein bL19 (122 aa).

It belongs to the bacterial ribosomal protein bL19 family.

Functionally, this protein is located at the 30S-50S ribosomal subunit interface and may play a role in the structure and function of the aminoacyl-tRNA binding site. This is Large ribosomal subunit protein bL19 from Mycoplasmoides gallisepticum (strain R(low / passage 15 / clone 2)) (Mycoplasma gallisepticum).